The sequence spans 112 residues: UPF0145 protein LAF_1635 (112 aa).

Belongs to the UPF0145 family.

The protein is UPF0145 protein LAF_1635 of Limosilactobacillus fermentum (strain NBRC 3956 / LMG 18251) (Lactobacillus fermentum).